The primary structure comprises 388 residues: Succinate--CoA ligase [ADP-forming] subunit beta (388 aa).

The ATP-grasp domain occupies 9 to 245; the sequence is KELLASYGLP…KSQENERELK (237 aa). Residues Lys46, 53–55, Glu100, Tyr103, and Glu108 each bind ATP; that span reads GRG. 2 residues coordinate Mg(2+): Asn200 and Asp214. Substrate is bound by residues Asn265 and 322–324; that span reads GIV.

This sequence belongs to the succinate/malate CoA ligase beta subunit family. Heterotetramer of two alpha and two beta subunits. Mg(2+) serves as cofactor.

It catalyses the reaction succinate + ATP + CoA = succinyl-CoA + ADP + phosphate. It carries out the reaction GTP + succinate + CoA = succinyl-CoA + GDP + phosphate. It functions in the pathway carbohydrate metabolism; tricarboxylic acid cycle; succinate from succinyl-CoA (ligase route): step 1/1. Succinyl-CoA synthetase functions in the citric acid cycle (TCA), coupling the hydrolysis of succinyl-CoA to the synthesis of either ATP or GTP and thus represents the only step of substrate-level phosphorylation in the TCA. The beta subunit provides nucleotide specificity of the enzyme and binds the substrate succinate, while the binding sites for coenzyme A and phosphate are found in the alpha subunit. The polypeptide is Succinate--CoA ligase [ADP-forming] subunit beta (Neisseria gonorrhoeae (strain NCCP11945)).